The primary structure comprises 315 residues: Putative olfactory receptor 2I1 (315 aa).

Residues 1–24 (MKANYSAEERFLLLGFSDWPSLQP) are Extracellular-facing. A helical membrane pass occupies residues 25–48 (VLFALVLLCYLLTLTGNSALVLLA). Topologically, residues 49 to 56 (VRDPRLHT) are cytoplasmic. The chain crosses the membrane as a helical span at residues 57 to 78 (PMYYFLCHLALVDAGFTTSVVP). At 79–99 (PLLANLRGPALWLPRSHCTAQ) the chain is on the extracellular side. A disulfide bridge connects residues C96 and C188. A helical transmembrane segment spans residues 100–119 (LCASLALGSAECVLLAVMAL). The Cytoplasmic segment spans residues 120–138 (DRAAAVCRPLRYAGLVSPR). A helical membrane pass occupies residues 139 to 157 (LCRTLASASWLSGLTNSVA). The Extracellular segment spans residues 158 to 195 (QTALLAERPLCAPRLLDHFICELPALLKLACGGDGDTT). The helical transmembrane segment at 196 to 219 (ENQMFAARVVILLLPFAVILASYG) threads the bilayer. The Cytoplasmic portion of the chain corresponds to 220 to 236 (AVARAVCCMRFSGGRRR). A helical membrane pass occupies residues 237–259 (AVGTCGSHLTAVCLFYGSAIYTY). Topologically, residues 260-272 (LQPAQRYNQARGK) are extracellular. The helical transmembrane segment at 273 to 292 (FVSLFYTVVTPALNPLIYTL) threads the bilayer. Residues 293-315 (RNKKVKGAARRLLRSLGRGQAGQ) are Cytoplasmic-facing.

Belongs to the G-protein coupled receptor 1 family.

Its subcellular location is the cell membrane. Its function is as follows. Odorant receptor. The protein is Putative olfactory receptor 2I1 of Homo sapiens (Human).